The chain runs to 80 residues: Acyl carrier protein (80 aa).

The region spanning 4 to 79 (EAILEKVRSI…DAVKYIEDKQ (76 aa)) is the Carrier domain. Ser-39 is modified (O-(pantetheine 4'-phosphoryl)serine).

This sequence belongs to the acyl carrier protein (ACP) family. 4'-phosphopantetheine is transferred from CoA to a specific serine of apo-ACP by AcpS. This modification is essential for activity because fatty acids are bound in thioester linkage to the sulfhydryl of the prosthetic group.

Its subcellular location is the cytoplasm. It participates in lipid metabolism; fatty acid biosynthesis. Its function is as follows. Carrier of the growing fatty acid chain in fatty acid biosynthesis. The polypeptide is Acyl carrier protein (Prochlorococcus marinus (strain SARG / CCMP1375 / SS120)).